We begin with the raw amino-acid sequence, 335 residues long: Replication factor C subunit 4 (335 aa).

Residue 56–63 participates in ATP binding; it reads SGPPGTGK.

The protein belongs to the activator 1 small subunits family. In terms of assembly, heterotetramer of subunits RFC2, RFC3, RFC4 and RFC5 that can form a complex with RFC1. As to expression, expressed in roots, leaves, shoot apical meristem (SAM), flag leaves and panicles.

Its subcellular location is the nucleus. In terms of biological role, may be involved in DNA replication and thus regulate cell proliferation. This Oryza sativa subsp. japonica (Rice) protein is Replication factor C subunit 4 (RFC4).